We begin with the raw amino-acid sequence, 224 residues long: 7-cyano-7-deazaguanine synthase (224 aa).

An ATP-binding site is contributed by 9–19 (ISGGMDSTLCA). Zn(2+)-binding residues include cysteine 190, cysteine 198, cysteine 201, and cysteine 204.

It belongs to the QueC family. The cofactor is Zn(2+).

The catalysed reaction is 7-carboxy-7-deazaguanine + NH4(+) + ATP = 7-cyano-7-deazaguanine + ADP + phosphate + H2O + H(+). The protein operates within purine metabolism; 7-cyano-7-deazaguanine biosynthesis. Functionally, catalyzes the ATP-dependent conversion of 7-carboxy-7-deazaguanine (CDG) to 7-cyano-7-deazaguanine (preQ(0)). In Campylobacter jejuni (strain RM1221), this protein is 7-cyano-7-deazaguanine synthase.